The chain runs to 297 residues: 4-diphosphocytidyl-2-C-methyl-D-erythritol kinase (297 aa).

The active site involves lysine 14. 99 to 109 (PVAAGIGGGSA) is an ATP binding site. Residue aspartate 141 is part of the active site.

The protein belongs to the GHMP kinase family. IspE subfamily.

The catalysed reaction is 4-CDP-2-C-methyl-D-erythritol + ATP = 4-CDP-2-C-methyl-D-erythritol 2-phosphate + ADP + H(+). It functions in the pathway isoprenoid biosynthesis; isopentenyl diphosphate biosynthesis via DXP pathway; isopentenyl diphosphate from 1-deoxy-D-xylulose 5-phosphate: step 3/6. Catalyzes the phosphorylation of the position 2 hydroxy group of 4-diphosphocytidyl-2C-methyl-D-erythritol. The polypeptide is 4-diphosphocytidyl-2-C-methyl-D-erythritol kinase (Bradyrhizobium diazoefficiens (strain JCM 10833 / BCRC 13528 / IAM 13628 / NBRC 14792 / USDA 110)).